Consider the following 72-residue polypeptide: VKRPMNAFMVWSQIERRKIMEQSPDMHNAEISKRLGKRWKLLKGSDKIPFIREAERLRLKHMADYPDYKYRP.

The segment at residues 1–69 (VKRPMNAFMV…KHMADYPDYK (69 aa)) is a DNA-binding region (HMG box).

Its subcellular location is the nucleus. In Alligator mississippiensis (American alligator), this protein is SRY-related protein AES1.